Reading from the N-terminus, the 504-residue chain is Ribosomal protein uS12 methylthiotransferase RimO (504 aa).

The region spanning 19–135 (KKVGFVSLGC…ILAASGIEPR (117 aa)) is the MTTase N-terminal domain. [4Fe-4S] cluster is bound by residues Cys28, Cys64, Cys98, Cys214, Cys218, and Cys221. The region spanning 200 to 430 (ATPKYMAYIK…MSLQKQISKK (231 aa)) is the Radical SAM core domain. One can recognise a TRAM domain in the interval 433-504 (KALIGREFDV…HDYDLVARLL (72 aa)).

It belongs to the methylthiotransferase family. RimO subfamily. Requires [4Fe-4S] cluster as cofactor.

It localises to the cytoplasm. The enzyme catalyses L-aspartate(89)-[ribosomal protein uS12]-hydrogen + (sulfur carrier)-SH + AH2 + 2 S-adenosyl-L-methionine = 3-methylsulfanyl-L-aspartate(89)-[ribosomal protein uS12]-hydrogen + (sulfur carrier)-H + 5'-deoxyadenosine + L-methionine + A + S-adenosyl-L-homocysteine + 2 H(+). Its function is as follows. Catalyzes the methylthiolation of an aspartic acid residue of ribosomal protein uS12. This chain is Ribosomal protein uS12 methylthiotransferase RimO, found in Koribacter versatilis (strain Ellin345).